A 340-amino-acid chain; its full sequence is Methane monooxygenase component C (340 aa).

One can recognise a 2Fe-2S ferredoxin-type domain in the interval 1–92 (MYQIVIETED…DLHLLVPYTY (92 aa)). Residues C37, C41, C44, and C76 each contribute to the [2Fe-2S] cluster site. The FAD-binding FR-type domain occupies 101–205 (QTNWLAEILA…RGPAGSFFLH (105 aa)). FAD is bound at residue 215-229 (VAGGTGLSPVLSMIR).

The soluble methane monooxygenase (sMMO) consists of four components A/MMOH (composed of alpha/MmoX, beta/MmoY and gamma/MmoZ), B/MMOB (MmoB), C/MMOR (MmoC) and D/MMOD (MmoD). [2Fe-2S] cluster is required as a cofactor.

It catalyses the reaction methane + NADH + O2 + H(+) = methanol + NAD(+) + H2O. The enzyme catalyses methane + NADPH + O2 + H(+) = methanol + NADP(+) + H2O. Functionally, responsible for the initial oxygenation of methane to methanol in methanotrophs. It also catalyzes the monohydroxylation of a variety of unactivated alkenes, alicyclic, aromatic and heterocyclic compounds. The component C is the iron-sulfur flavoprotein of sMMO. The sequence is that of Methane monooxygenase component C (mmoC) from Methylosinus trichosporium.